A 379-amino-acid polypeptide reads, in one-letter code: Alanine racemase (379 aa).

K35 (proton acceptor; specific for D-alanine) is an active-site residue. K35 is modified (N6-(pyridoxal phosphate)lysine). Residue R133 participates in substrate binding. Y265 serves as the catalytic Proton acceptor; specific for L-alanine. M312 contributes to the substrate binding site.

This sequence belongs to the alanine racemase family. Pyridoxal 5'-phosphate is required as a cofactor.

It carries out the reaction L-alanine = D-alanine. The protein operates within amino-acid biosynthesis; D-alanine biosynthesis; D-alanine from L-alanine: step 1/1. Its function is as follows. Catalyzes the interconversion of L-alanine and D-alanine. May also act on other amino acids. The sequence is that of Alanine racemase (alr) from Treponema denticola (strain ATCC 35405 / DSM 14222 / CIP 103919 / JCM 8153 / KCTC 15104).